A 495-amino-acid chain; its full sequence is Dihydrolipoyl dehydrogenase, mitochondrial (495 aa).

FAD-binding positions include 59–68, lysine 77, and 169–171; these read EKNATLGGTC and SGS. Cysteines 68 and 73 form a disulfide. NAD(+) contacts are provided by residues 206 to 213, glutamate 229, valine 264, and glycine 299; that span reads GAGVIGLE. Residues aspartate 340 and 346 to 349 contribute to the FAD site; that span reads MLAH. Histidine 472 functions as the Proton acceptor in the catalytic mechanism.

This sequence belongs to the class-I pyridine nucleotide-disulfide oxidoreductase family. The cofactor is FAD.

The protein resides in the mitochondrion matrix. It catalyses the reaction N(6)-[(R)-dihydrolipoyl]-L-lysyl-[protein] + NAD(+) = N(6)-[(R)-lipoyl]-L-lysyl-[protein] + NADH + H(+). The protein is Dihydrolipoyl dehydrogenase, mitochondrial (dld-1) of Caenorhabditis elegans.